The primary structure comprises 255 residues: Ribonuclease PH (255 aa).

Phosphate-binding positions include R86 and 124 to 126 (GTR).

Belongs to the RNase PH family. As to quaternary structure, homohexameric ring arranged as a trimer of dimers.

It carries out the reaction tRNA(n+1) + phosphate = tRNA(n) + a ribonucleoside 5'-diphosphate. Its function is as follows. Phosphorolytic 3'-5' exoribonuclease that plays an important role in tRNA 3'-end maturation. Removes nucleotide residues following the 3'-CCA terminus of tRNAs; can also add nucleotides to the ends of RNA molecules by using nucleoside diphosphates as substrates, but this may not be physiologically important. Probably plays a role in initiation of 16S rRNA degradation (leading to ribosome degradation) during starvation. The sequence is that of Ribonuclease PH from Geobacillus thermodenitrificans (strain NG80-2).